The following is a 294-amino-acid chain: 4-hydroxy-tetrahydrodipicolinate synthase (294 aa).

T47 provides a ligand contact to pyruvate. Y135 acts as the Proton donor/acceptor in catalysis. K163 serves as the catalytic Schiff-base intermediate with substrate. T205 is a pyruvate binding site.

The protein belongs to the DapA family. In terms of assembly, homotetramer; dimer of dimers.

It localises to the cytoplasm. The enzyme catalyses L-aspartate 4-semialdehyde + pyruvate = (2S,4S)-4-hydroxy-2,3,4,5-tetrahydrodipicolinate + H2O + H(+). It functions in the pathway amino-acid biosynthesis; L-lysine biosynthesis via DAP pathway; (S)-tetrahydrodipicolinate from L-aspartate: step 3/4. In terms of biological role, catalyzes the condensation of (S)-aspartate-beta-semialdehyde [(S)-ASA] and pyruvate to 4-hydroxy-tetrahydrodipicolinate (HTPA). This chain is 4-hydroxy-tetrahydrodipicolinate synthase, found in Rickettsia akari (strain Hartford).